The following is a 185-amino-acid chain: MRIFGYARVSTSQQSLDIQIRALKDAGVKANRIFTDKASGSSTDREGLDLLRMKVEEGDVILVKKLDRLGRDTADMIQLIKEFDAQGVAVRFIDDGISTDGDMGQMVVTILSAVAQAERRRILERTNEGRQEAKLKGIKFGRRRTVDRNVVLTLHQKGTGATEIAHQLSIARSTVYKILEDERAS.

Residues 2 to 137 (RIFGYARVST…EGRQEAKLKG (136 aa)) form the Resolvase/invertase-type recombinase catalytic domain. The active-site O-(5'-phospho-DNA)-serine intermediate is Ser10. The segment at residues 161–180 (ATEIAHQLSIARSTVYKILE) is a DNA-binding region (H-T-H motif).

The protein belongs to the site-specific recombinase resolvase family.

In terms of biological role, resolvase catalyzes the resolution (a site-specific recombination) of the cointegrated replicon to yield the final transposition products. This is Transposon Tn3 resolvase (tnpR) from Escherichia coli.